Consider the following 98-residue polypeptide: Integration host factor subunit alpha (98 aa).

The interval 49–71 is disordered; sequence FGNFDLRDKNQRPGRNPKTGEDI.

Belongs to the bacterial histone-like protein family. As to quaternary structure, heterodimer of an alpha and a beta chain.

Its function is as follows. This protein is one of the two subunits of integration host factor, a specific DNA-binding protein that functions in genetic recombination as well as in transcriptional and translational control. In Shewanella sp. (strain ANA-3), this protein is Integration host factor subunit alpha.